The primary structure comprises 614 residues: Fem-3 mRNA-binding factor 1 (614 aa).

Residues 1 to 24 are compositionally biased toward polar residues; sequence MDQSKMRYTNQFRKTPQKPTSTEV. A disordered region spans residues 1 to 34; the sequence is MDQSKMRYTNQFRKTPQKPTSTEVGNHHTPAHSP. The PUM-HD domain maps to 160–564; it reads TRSNNVLPTW…KMIETLAHLR (405 aa). Pumilio repeat units follow at residues 185–223, 224–263, 269–305, 306–342, 343–382, 398–434, 436–471, and 483–519; these read EVLD…QLFE, QVIG…NIKR, NFIS…KLVQ, ALPR…EFIV, DFVA…DLTS, SVTN…CIIE, CLMR…EMMD, and TGKD…RQTK. The tract at residues 283 to 614 is binding to gld-3 isoform A; sequence FACRVIQSSL…NLRLMRTFSP (332 aa).

Interacts (via C-terminus) with gld-3 isoform A in an RNA-independent manner. In terms of tissue distribution, expressed specifically in the germline (at protein level).

Its subcellular location is the cytoplasm. In terms of biological role, RNA-binding protein that binds to the consensus sequence 5'-UGUGCCAUA-3' in mRNA 3'-UTRs. Involved in the control of stem cells and sex determination in the C.elegans hermaphrodite germline. May also play a role in the hermaphrodite germline proliferation and oogenesis. Binds specifically to the regulatory region of fem-3 3'-UTR and mediates the sperm/oocyte switch. Negatively regulates gld-3 expression, possibly by directly binding to two sites within the 3'-UTR of gld-3 isoform b. In association with the cye-1/cdk-2 complex, negatively regulates gld-1 expression in the distal germline cells of the mitotic zone. By binding to the 3'-UTR, represses phosphatase lip-1 expression in the distal part of the germline mitotic zone. Suppresses germline tumor formation by preventing the dedifferentiation of secondary spermatocytes. The chain is Fem-3 mRNA-binding factor 1 (fbf-1) from Caenorhabditis elegans.